A 675-amino-acid polypeptide reads, in one-letter code: Methionine--tRNA ligase (675 aa).

A 'HIGH' region motif is present at residues 15–25 (PYANGSIHLGH). Residues Cys-146, Cys-149, Cys-159, and Cys-162 each contribute to the Zn(2+) site. The 'KMSKS' region motif lies at 332 to 336 (KMSKS). Lys-335 serves as a coordination point for ATP. One can recognise a tRNA-binding domain in the interval 573–675 (DFAKVDMRIA…SGAQPGMQVK (103 aa)).

This sequence belongs to the class-I aminoacyl-tRNA synthetase family. MetG type 1 subfamily. As to quaternary structure, homodimer. The cofactor is Zn(2+).

Its subcellular location is the cytoplasm. The catalysed reaction is tRNA(Met) + L-methionine + ATP = L-methionyl-tRNA(Met) + AMP + diphosphate. Is required not only for elongation of protein synthesis but also for the initiation of all mRNA translation through initiator tRNA(fMet) aminoacylation. The sequence is that of Methionine--tRNA ligase from Yersinia pseudotuberculosis serotype IB (strain PB1/+).